A 66-amino-acid polypeptide reads, in one-letter code: Large ribosomal subunit protein bL33c (66 aa).

It belongs to the bacterial ribosomal protein bL33 family.

The protein localises to the plastid. It is found in the chloroplast. This is Large ribosomal subunit protein bL33c from Drimys granadensis.